We begin with the raw amino-acid sequence, 476 residues long: Glycogen synthase (476 aa).

Lys-15 serves as a coordination point for ADP-alpha-D-glucose.

It belongs to the glycosyltransferase 1 family. Bacterial/plant glycogen synthase subfamily.

It catalyses the reaction [(1-&gt;4)-alpha-D-glucosyl](n) + ADP-alpha-D-glucose = [(1-&gt;4)-alpha-D-glucosyl](n+1) + ADP + H(+). It functions in the pathway glycan biosynthesis; glycogen biosynthesis. Its function is as follows. Synthesizes alpha-1,4-glucan chains using ADP-glucose. The polypeptide is Glycogen synthase (Ligilactobacillus salivarius (strain UCC118) (Lactobacillus salivarius)).